Here is a 324-residue protein sequence, read N- to C-terminus: Olfactory receptor 2T2 (324 aa).

Residues 1–26 (MGMEGLLQNSTNFVLTGLITHPAFPG) lie on the Extracellular side of the membrane. Asn9 is a glycosylation site (N-linked (GlcNAc...) asparagine). The chain crosses the membrane as a helical span at residues 27-50 (LLFAIVFSIFVVAITANLVMILLI). Topologically, residues 51 to 58 (HMDSRLHT) are cytoplasmic. The chain crosses the membrane as a helical span at residues 59–80 (PMYFLLSQLSIMDTIYICITVP). Topologically, residues 81–101 (KMLQDLLSKDKTISFLGCAVQ) are extracellular. Cys98 and Cys190 are oxidised to a cystine. Residues 102–121 (IFLYLTLIGGEFFLLGLMAY) traverse the membrane as a helical segment. Residues 122–140 (DRYVAVCNPLRYPLLMNRR) are Cytoplasmic-facing. A helical membrane pass occupies residues 141-159 (VCLFMVVGSWVGGSLDGFM). At 160 to 196 (LTPVTMSFPFCRSREINHFFCEIPAVLKLSCTDTSLY) the chain is on the extracellular side. A helical membrane pass occupies residues 197–220 (ETLMYACCVLMLLIPLSVISVSYT). Residues 221-237 (HILLTVHRMNSAEGRRK) are Cytoplasmic-facing. Residues 238 to 260 (AFATCSSHIMVVSVFYGAAFYTN) traverse the membrane as a helical segment. Topologically, residues 261 to 273 (VLPHSYHTPEKDK) are extracellular. The chain crosses the membrane as a helical span at residues 274-293 (VVSAFYTILTPMLNPLIYSL). Over 294–324 (RNKDVAAALRKVLGRCGSSQSIRVATVIRKG) the chain is Cytoplasmic.

It belongs to the G-protein coupled receptor 1 family.

It is found in the cell membrane. Functionally, odorant receptor. In Homo sapiens (Human), this protein is Olfactory receptor 2T2 (OR2T2).